Here is a 387-residue protein sequence, read N- to C-terminus: Flap endonuclease 1 (387 aa).

Positions 1-104 (MGILGLSKLI…GELAKRAERR (104 aa)) are N-domain. Residue D34 coordinates Mg(2+). Residues R47 and R70 each coordinate DNA. Mg(2+) contacts are provided by D86, E158, E160, D179, and D181. The interval 122-253 (GIEKFNRRLV…KRAIELINNY (132 aa)) is I-domain. Residue E158 coordinates DNA. Residues G231 and D233 each contribute to the DNA site. Position 233 (D233) interacts with Mg(2+). Positions 336 to 344 (TQVRLDSFF) are interaction with PCNA. Residues 345–387 (KTLPSTPNATNAAKRKAEEAKKSANNKKAKTSGGGGGRGRRPK) are disordered.

It belongs to the XPG/RAD2 endonuclease family. FEN1 subfamily. In terms of assembly, interacts with PCNA. Three molecules of FEN1 bind to one PCNA trimer with each molecule binding to one PCNA monomer. PCNA stimulates the nuclease activity without altering cleavage specificity. Requires Mg(2+) as cofactor. In terms of processing, phosphorylated. Phosphorylation upon DNA damage induces relocalization to the nuclear plasma.

It is found in the nucleus. The protein localises to the nucleolus. It localises to the nucleoplasm. Its subcellular location is the mitochondrion. Functionally, structure-specific nuclease with 5'-flap endonuclease and 5'-3' exonuclease activities involved in DNA replication and repair. During DNA replication, cleaves the 5'-overhanging flap structure that is generated by displacement synthesis when DNA polymerase encounters the 5'-end of a downstream Okazaki fragment. It enters the flap from the 5'-end and then tracks to cleave the flap base, leaving a nick for ligation. Also involved in the long patch base excision repair (LP-BER) pathway, by cleaving within the apurinic/apyrimidinic (AP) site-terminated flap. Acts as a genome stabilization factor that prevents flaps from equilibrating into structures that lead to duplications and deletions. Also possesses 5'-3' exonuclease activity on nicked or gapped double-stranded DNA, and exhibits RNase H activity. Also involved in replication and repair of rDNA and in repairing mitochondrial DNA. This is Flap endonuclease 1 from Drosophila yakuba (Fruit fly).